Here is a 234-residue protein sequence, read N- to C-terminus: Nuclear ubiquitous casein and cyclin-dependent kinase substrate 1 (234 aa).

Positions 1-234 are disordered; sequence MSRPVRNRKV…SEDEASSGED (234 aa). Tyrosine 13 carries the post-translational modification Phosphotyrosine. Residues serine 14 and serine 19 each carry the phosphoserine modification. Tyrosine 26 is subject to Phosphotyrosine. The span at 35-51 shows a compositional bias: basic residues; it reads KKIRSSPREAKNKRRSG. 6 positions are modified to phosphoserine: serine 54, serine 58, serine 61, serine 73, serine 75, and serine 79. Residues 64–77 show a composition bias toward basic and acidic residues; it reads KDVKTKKDDSHSAE. Residues 91 to 100 show a composition bias toward low complexity; that stretch reads QQRQAASKAA. Residues 111–124 show a composition bias toward acidic residues; it reads VGSEEEPEEDDEAP. A phosphoserine mark is found at serine 113, serine 130, serine 132, and serine 144. The span at 132 to 145 shows a compositional bias: acidic residues; it reads SDEDFLMEDDDDSD. Positions 149–174 are enriched in basic residues; it reads SKKKNKKMVKKSKPERKEKKMPKPRL. A Phosphothreonine modification is found at threonine 179. Serine 181 is modified (phosphoserine). Over residues 185–199 the composition is skewed to basic residues; sequence GKAKVGRPTASKKSK. At threonine 202 the chain carries Phosphothreonine. Phosphoserine occurs at positions 204, 214, 225, and 231. The segment covering 223 to 234 has biased composition (acidic residues); that stretch reads EGSEDEASSGED.

In terms of assembly, does not interact with RAD51. Phosphorylated in an ATM-dependent manner in response to DNA damage. Phosphorylated by CDK1 and casein kinase.

The protein resides in the nucleus. It localises to the chromosome. Functionally, chromatin-associated protein involved in DNA repair by promoting homologous recombination (HR). Binds double-stranded DNA (dsDNA) and secondary DNA structures, such as D-loop structures, but with less affinity than RAD51AP1. This Mus musculus (Mouse) protein is Nuclear ubiquitous casein and cyclin-dependent kinase substrate 1 (Nucks1).